Consider the following 328-residue polypeptide: L-serine dehydratase/L-threonine deaminase (328 aa).

Residue K41 is modified to N6-(pyridoxal phosphate)lysine. P128 serves as a coordination point for pyridoxal 5'-phosphate.

Belongs to the serine/threonine dehydratase family. As to quaternary structure, homodimer. Pyridoxal 5'-phosphate is required as a cofactor. Predominantly expressed in the perivenous regions of the liver.

The protein localises to the cytoplasm. The catalysed reaction is L-serine = pyruvate + NH4(+). It carries out the reaction L-threonine = 2-oxobutanoate + NH4(+). Its pathway is carbohydrate biosynthesis; gluconeogenesis. Functionally, catalyzes the pyridoxal-phosphate-dependent dehydrative deamination of L-threonine and L-serine to ammonia and alpha-ketobutyrate and pyruvate, respectively. In Homo sapiens (Human), this protein is L-serine dehydratase/L-threonine deaminase (SDS).